The following is a 109-amino-acid chain: RYamide neuropeptides (109 aa).

Positions 1–22 (MNECVNKLLHLKFLFYFILGIQ) are cleaved as a signal peptide. Tyrosine 33 bears the Tyrosine amide mark. A propeptide spanning residues 36–53 (STTYDESLKSRRIFIVPR) is cleaved from the precursor. Tyrosine amide is present on tyrosine 63. A propeptide spanning residues 67-109 (SGKYLCLSREINKLIVRKRLRNNDKERTPTLSFITKHFLMRNT) is cleaved from the precursor.

Its subcellular location is the secreted. Functionally, neuropeptides RYamide-1 and RYamide-2 are ligands for the G-protein coupled receptor RYa-R. May suppress feeding behavior. The polypeptide is RYamide neuropeptides (Drosophila melanogaster (Fruit fly)).